Reading from the N-terminus, the 1063-residue chain is Integrin alpha-8 (1063 aa).

A signal peptide spans 1–38 (MSPGASRGPRGSQAPLIAPLCCAAAALGMLLWSPACQA). Topologically, residues 39–1012 (FNLDVEKLTV…TPNVSFSIPL (974 aa)) are extracellular. 7 FG-GAP repeats span residues 44-105 (EKLT…GSAQ), 122-183 (NGTK…AYAE), 188-240 (RNSN…IANY), 253-306 (KQTE…STDM), 307-372 (TFIQ…LLFR), 373-431 (DPQI…GLNT), and 435-498 (QVLQ…LHPM). N-linked (GlcNAc...) asparagine glycosylation is present at Asn81. An intrachain disulfide couples Cys96 to Cys106. The N-linked (GlcNAc...) asparagine glycan is linked to Asn122. Cys150 and Cys171 form a disulfide bridge. A glycan (N-linked (GlcNAc...) asparagine) is linked at Asn177. An intrachain disulfide couples Cys187 to Cys200. Asn239 carries an N-linked (GlcNAc...) asparagine glycan. Ca(2+)-binding residues include Glu275, Thr277, Asp279, and Glu283. Asn302 and Asn311 each carry an N-linked (GlcNAc...) asparagine glycan. Ca(2+) is bound by residues Asp329, Asn331, Asp333, Leu335, Asp337, Asp395, Asn397, Asp399, Tyr401, and Asp403. Residues 455–457 (RGD) carry the Cell attachment site motif. Residues Asp459, Asp461, Asn463, Tyr465, and Asp467 each coordinate Ca(2+). The N-linked (GlcNAc...) asparagine glycan is linked to Asn504. Intrachain disulfides connect Cys507–Cys518 and Cys524–Cys580. 2 N-linked (GlcNAc...) asparagine glycosylation sites follow: Asn601 and Asn605. 2 cysteine pairs are disulfide-bonded: Cys641/Cys647 and Cys713/Cys726. 6 N-linked (GlcNAc...) asparagine glycosylation sites follow: Asn719, Asn737, Asn753, Asn780, Asn896, and Asn923. Disulfide bonds link Cys867–Cys924 and Cys929–Cys934. The N-linked (GlcNAc...) asparagine glycan is linked to Asn1005. The chain crosses the membrane as a helical span at residues 1013–1033 (WVIILAILLGLLVLAILTLAL). Residues 1034–1063 (WKCGFFDRARPPQEDMTDREQLTNDKTPEA) lie on the Cytoplasmic side of the membrane.

The protein belongs to the integrin alpha chain family. In terms of assembly, heterodimer of an alpha and a beta subunit. The alpha subunit is composed of a heavy and a light chain linked by a disulfide bond. Alpha-8 associates with beta-1. As to expression, expressed in mesenchymal cells, including alveolar myofibroblasts, kidney mesangial cells and hepatic stellar cells and vascular and visceral smooth muscle (at protein level).

Its subcellular location is the membrane. It localises to the cell membrane. Integrin alpha-8/beta-1 functions in the genesis of kidney and probably of other organs by regulating the recruitment of mesenchymal cells into epithelial structures. It recognizes the sequence R-G-D in a wide array of ligands including TNC, FN1, SPP1 TGFB1, TGFB3 and VTN. NPNT is probably its functional ligand in kidney genesis. Neuronal receptor for TNC it mediates cell-cell interactions and regulates neurite outgrowth of sensory and motor neurons. The sequence is that of Integrin alpha-8 (ITGA8) from Homo sapiens (Human).